Consider the following 365-residue polypeptide: NAD(P)H-quinone oxidoreductase subunit 1, chloroplastic (365 aa).

6 helical membrane-spanning segments follow: residues 29–49 (IWLLVPIFTLILVIIIGVLVI), 106–126 (IAVISTLLSYLVIPFGYHLVL), 129–149 (LSIGVFLWIAISSIAPIGLLM), 250–270 (YSGIKFGLFYVASYLNLLVSS), 302–322 (IFGMTIGILITLAKAYLFLFI), and 338–358 (LLNLGWKFLLPISLGNLLLTT).

It belongs to the complex I subunit 1 family. As to quaternary structure, NDH is composed of at least 16 different subunits, 5 of which are encoded in the nucleus.

The protein localises to the plastid. It is found in the chloroplast thylakoid membrane. It carries out the reaction a plastoquinone + NADH + (n+1) H(+)(in) = a plastoquinol + NAD(+) + n H(+)(out). The enzyme catalyses a plastoquinone + NADPH + (n+1) H(+)(in) = a plastoquinol + NADP(+) + n H(+)(out). NDH shuttles electrons from NAD(P)H:plastoquinone, via FMN and iron-sulfur (Fe-S) centers, to quinones in the photosynthetic chain and possibly in a chloroplast respiratory chain. The immediate electron acceptor for the enzyme in this species is believed to be plastoquinone. Couples the redox reaction to proton translocation, and thus conserves the redox energy in a proton gradient. This Acorus calamus (Sweet flag) protein is NAD(P)H-quinone oxidoreductase subunit 1, chloroplastic.